Reading from the N-terminus, the 223-residue chain is Small heat shock protein hspI, mitochondrial (223 aa).

A mitochondrion-targeting transit peptide spans 1–23; the sequence is MYKLSKTTPFFFRRAFLCGRRGG. The sHSP domain occupies 109-223; sequence KTRGFRSPKT…YVKSTTINVQ (115 aa).

Belongs to the small heat shock protein (HSP20) family.

The protein resides in the mitochondrion. This chain is Small heat shock protein hspI, mitochondrial (hspI), found in Dictyostelium discoideum (Social amoeba).